The sequence spans 590 residues: Protein NRT1/ PTR FAMILY 8.5 (590 aa).

The helical transmembrane segment at 96-116 threads the bilayer; it reads ASDVMIWQGTCYITPLIGAVI. Phosphothreonine is present on T126. A run of 10 helical transmembrane segments spans residues 130–150, 168–188, 214–234, 242–262, 365–385, 401–421, 445–465, 478–498, 524–544, and 562–582; these read FSAI…LPVL, TVQY…TGGI, FFNW…TLLV, WGLG…SFFI, FPIW…STLF, IPPA…IPIY, MGIG…VETV, IFWQ…FFIG, AVGS…TALG, and FFWL…LICV.

Belongs to the major facilitator superfamily. Proton-dependent oligopeptide transporter (POT/PTR) (TC 2.A.17) family. In terms of tissue distribution, expressed in shoots, roots, stems, leaves, flowers and siliques.

The protein resides in the membrane. This is Protein NRT1/ PTR FAMILY 8.5 (NPF8.5) from Arabidopsis thaliana (Mouse-ear cress).